A 380-amino-acid polypeptide reads, in one-letter code: Cytochrome b (380 aa).

Helical transmembrane passes span 33–53 (FGSL…FLAM), 77–98 (WLIR…YLHV), 113–133 (WNIG…GYVL), and 178–198 (FFAF…IHLL). Heme b contacts are provided by His83 and His97. Residues His182 and His196 each coordinate heme b. Residue His201 coordinates a ubiquinone. Transmembrane regions (helical) follow at residues 226–246 (YKDL…ALFS), 288–308 (LGGV…PMLH), 320–340 (LSQI…WIGG), and 347–367 (FVLI…IALP).

Belongs to the cytochrome b family. In terms of assembly, the cytochrome bc1 complex contains 3 respiratory subunits (MT-CYB, CYC1 and UQCRFS1), 2 core proteins (UQCRC1 and UQCRC2) and probably 6 low-molecular weight proteins. It depends on heme b as a cofactor.

The protein resides in the mitochondrion inner membrane. Component of the ubiquinol-cytochrome c reductase complex (complex III or cytochrome b-c1 complex) that is part of the mitochondrial respiratory chain. The b-c1 complex mediates electron transfer from ubiquinol to cytochrome c. Contributes to the generation of a proton gradient across the mitochondrial membrane that is then used for ATP synthesis. The sequence is that of Cytochrome b (mt-cyb) from Acipenser transmontanus (White sturgeon).